The sequence spans 190 residues: Elongation factor P-like protein (190 aa).

This sequence belongs to the elongation factor P family.

The chain is Elongation factor P-like protein from Escherichia fergusonii (strain ATCC 35469 / DSM 13698 / CCUG 18766 / IAM 14443 / JCM 21226 / LMG 7866 / NBRC 102419 / NCTC 12128 / CDC 0568-73).